Reading from the N-terminus, the 86-residue chain is UPF0335 protein BruAb1_1737 (86 aa).

Belongs to the UPF0335 family.

The protein is UPF0335 protein BruAb1_1737 of Brucella abortus biovar 1 (strain 9-941).